An 89-amino-acid chain; its full sequence is MDGIKYAVFTEKSIRLLGNNQYTSNVESGSTRTEIKHWVELFFGVKVIAMNSHRLPGKGRRMGHTMHYRRMIITLQPGYSIPPLIEKRT.

It belongs to the universal ribosomal protein uL23 family. In terms of assembly, part of the 50S ribosomal subunit.

The protein localises to the plastid. The protein resides in the chloroplast. Functionally, binds to 23S rRNA. This Calycanthus floridus var. glaucus (Eastern sweetshrub) protein is Large ribosomal subunit protein uL23cz/uL23cy (rpl23-A).